We begin with the raw amino-acid sequence, 317 residues long: MKVLWAALLVTFLAGCQAKVEQPVEPETEPELRQQAEGQSGQPWELALGRFWDYLRWVQTLSEQVQEELLSPQVTQELTTLMDETMKELKAYKSELEEQLSPVAEETRARLSKELQAAQARLGADMEDVRSRLVQYRSEVQAMLGQSTEELRARLASHLRKLRKRLLRDADDLQKRLAVYQAGAREGAERGVSAIRERLGPLVEQGRVRAATVGSLASQPLQERAQALGERLRARMEEMGSRTRDRLDEVKEQVAEVRAKLEEQAQQISLQAEAFQARLKSWFEPLVEDMQRQWAGLVEKVQAAVGASTAPVPSDNH.

An N-terminal signal peptide occupies residues 1–18 (MKVLWAALLVTFLAGCQA). Repeat copies occupy residues 80 to 101 (TLMDETMKELKAYKSELEEQLS), 102 to 123 (PVAEETRARLSKELQAAQARLG), 124 to 145 (ADMEDVRSRLVQYRSEVQAMLG), 146 to 167 (QSTEELRARLASHLRKLRKRLL), 168 to 189 (RDADDLQKRLAVYQAGAREGAE), 190 to 211 (RGVSAIRERLGPLVEQGRVRAA), 212 to 233 (TVGSLASQPLQERAQALGERLR), and 234 to 255 (ARMEEMGSRTRDRLDEVKEQVA). Residues 80 to 255 (TLMDETMKEL…RLDEVKEQVA (176 aa)) form an 8 X 22 AA approximate tandem repeats region. Met143 carries the methionine sulfoxide modification. Ser147 carries the phosphoserine modification. The tract at residues 158–168 (HLRKLRKRLLR) is LDL and other lipoprotein receptors binding. 162–165 (LRKR) provides a ligand contact to heparin. Positions 210–290 (AATVGSLASQ…SWFEPLVEDM (81 aa)) are lipid-binding and lipoprotein association. The O-linked (GalNAc...) threonine glycan is linked to Thr212. 229–236 (GERLRARM) lines the heparin pocket. The interval 266–317 (QQISLQAEAFQARLKSWFEPLVEDMQRQWAGLVEKVQAAVGASTAPVPSDNH) is homooligomerization. Positions 278 to 290 (RLKSWFEPLVEDM) are specificity for association with VLDL.

Belongs to the apolipoprotein A1/A4/E family. In terms of assembly, homotetramer. May interact with ABCA1; functionally associated with ABCA1 in the biogenesis of HDLs. May interact with APP/A4 amyloid-beta peptide; the interaction is extremely stable in vitro but its physiological significance is unclear. May interact with MAPT. May interact with MAP2. In the cerebrospinal fluid, interacts with secreted SORL1. Interacts with PMEL; this allows the loading of PMEL luminal fragment on ILVs to induce fibril nucleation. Post-translationally, APOE exists as multiple glycosylated and sialylated glycoforms within cells and in plasma. The extent of glycosylation and sialylation are tissue and context specific. In terms of processing, glycated in plasma VLDL. Phosphorylated by FAM20C in the extracellular medium.

The protein resides in the secreted. It localises to the extracellular space. It is found in the extracellular matrix. Its subcellular location is the extracellular vesicle. The protein localises to the endosome. The protein resides in the multivesicular body. In terms of biological role, APOE is an apolipoprotein, a protein associating with lipid particles, that mainly functions in lipoprotein-mediated lipid transport between organs via the plasma and interstitial fluids. APOE is a core component of plasma lipoproteins and is involved in their production, conversion and clearance. Apolipoproteins are amphipathic molecules that interact both with lipids of the lipoprotein particle core and the aqueous environment of the plasma. As such, APOE associates with chylomicrons, chylomicron remnants, very low density lipoproteins (VLDL) and intermediate density lipoproteins (IDL) but shows a preferential binding to high-density lipoproteins (HDL). It also binds a wide range of cellular receptors including the LDL receptor/LDLR, the LDL receptor-related proteins LRP1, LRP2 and LRP8 and the very low-density lipoprotein receptor/VLDLR that mediate the cellular uptake of the APOE-containing lipoprotein particles. Finally, APOE also has a heparin-binding activity and binds heparan-sulfate proteoglycans on the surface of cells, a property that supports the capture and the receptor-mediated uptake of APOE-containing lipoproteins by cells. A main function of APOE is to mediate lipoprotein clearance through the uptake of chylomicrons, VLDLs, and HDLs by hepatocytes. APOE is also involved in the biosynthesis by the liver of VLDLs as well as their uptake by peripheral tissues ensuring the delivery of triglycerides and energy storage in muscle, heart and adipose tissues. By participating in the lipoprotein-mediated distribution of lipids among tissues, APOE plays a critical role in plasma and tissues lipid homeostasis. APOE is also involved in two steps of reverse cholesterol transport, the HDLs-mediated transport of cholesterol from peripheral tissues to the liver, and thereby plays an important role in cholesterol homeostasis. First, it is functionally associated with ABCA1 in the biogenesis of HDLs in tissues. Second, it is enriched in circulating HDLs and mediates their uptake by hepatocytes. APOE also plays an important role in lipid transport in the central nervous system, regulating neuron survival and sprouting. This chain is Apolipoprotein E (APOE), found in Macaca nemestrina (Pig-tailed macaque).